The chain runs to 500 residues: Probable cytosol aminopeptidase (500 aa).

Lys265 and Asp270 together coordinate Mn(2+). Lys277 is a catalytic residue. Residues Asp288, Asp347, and Glu349 each contribute to the Mn(2+) site. Arg351 is an active-site residue.

It belongs to the peptidase M17 family. The cofactor is Mn(2+).

The protein resides in the cytoplasm. It carries out the reaction Release of an N-terminal amino acid, Xaa-|-Yaa-, in which Xaa is preferably Leu, but may be other amino acids including Pro although not Arg or Lys, and Yaa may be Pro. Amino acid amides and methyl esters are also readily hydrolyzed, but rates on arylamides are exceedingly low.. The catalysed reaction is Release of an N-terminal amino acid, preferentially leucine, but not glutamic or aspartic acids.. Its function is as follows. Presumably involved in the processing and regular turnover of intracellular proteins. Catalyzes the removal of unsubstituted N-terminal amino acids from various peptides. This chain is Probable cytosol aminopeptidase, found in Rickettsia felis (strain ATCC VR-1525 / URRWXCal2) (Rickettsia azadi).